Consider the following 123-residue polypeptide: rRNA-processing protein cgr-1 (123 aa).

Residues 1 to 13 show a composition bias toward low complexity; that stretch reads MSSTTTTTQTTSQ. 2 disordered regions span residues 1–47 and 85–123; these read MSST…GLTS and EKRA…LINS. Positions 49–110 form a coiled coil; the sequence is EKRAKERQLL…EKMHKKRVER (62 aa). Residues 85–102 are compositionally biased toward basic and acidic residues; the sequence is EKRAKKEEKERYEKMAEK. The span at 103–123 shows a compositional bias: basic residues; sequence MHKKRVERLKRKEKRNKLINS.

The protein belongs to the CGR1 family.

It localises to the nucleus. The protein localises to the nucleolus. Involved in nucleolar integrity and required for processing of the pre-rRNA for the 60S ribosome subunit. In Neurospora crassa (strain ATCC 24698 / 74-OR23-1A / CBS 708.71 / DSM 1257 / FGSC 987), this protein is rRNA-processing protein cgr-1 (cgr-1).